The chain runs to 344 residues: Tetraacyldisaccharide 4'-kinase (344 aa).

Residue 65-72 participates in ATP binding; sequence HAGGTGKT.

Belongs to the LpxK family.

The enzyme catalyses a lipid A disaccharide + ATP = a lipid IVA + ADP + H(+). Its pathway is glycolipid biosynthesis; lipid IV(A) biosynthesis; lipid IV(A) from (3R)-3-hydroxytetradecanoyl-[acyl-carrier-protein] and UDP-N-acetyl-alpha-D-glucosamine: step 6/6. Its function is as follows. Transfers the gamma-phosphate of ATP to the 4'-position of a tetraacyldisaccharide 1-phosphate intermediate (termed DS-1-P) to form tetraacyldisaccharide 1,4'-bis-phosphate (lipid IVA). In Neisseria meningitidis serogroup B (strain ATCC BAA-335 / MC58), this protein is Tetraacyldisaccharide 4'-kinase.